The sequence spans 502 residues: Zinc finger C3HC-type protein 1 (502 aa).

Alanine 2 carries the post-translational modification N-acetylalanine. Serine 24 carries the post-translational modification Phosphoserine. Threonine 28 is subject to Phosphothreonine. The segment at 35-74 is disordered; it reads LIDEGIAPEEGGVDAQDTSATSQSVNGSPQAEQPSLESTS. Polar residues predominate over residues 50–72; it reads QDTSATSQSVNGSPQAEQPSLES. Serine 58 and serine 62 each carry phosphoserine. Position 84 is a phosphothreonine (threonine 84). The C3HC-type zinc-finger motif lies at 102–156; sequence CAKYGWVTVECDMLKCSSCQAFLCASLQPAFDFDRYKQRCAELKKALCTAHEKFC. Positions 302–423 are disordered; the sequence is SSPIPGLEGR…SSRSFFDPTS (122 aa). Phosphoserine occurs at positions 321 and 329. Threonine 333 is modified (phosphothreonine). Serine 338, serine 344, serine 354, serine 359, and serine 370 each carry phosphoserine. Polar residues predominate over residues 351–360; sequence RTRSWDSSSP. A compositionally biased stretch (low complexity) spans 371–380; sequence PTTRTRPVTR. Phosphoserine is present on serine 381. Phosphothreonine is present on threonine 384. A Phosphoserine modification is found at serine 395. The Nuclear localization signal motif lies at 396 to 402; sequence PLRKAKR. Residues serine 407 and serine 483 each carry the phosphoserine modification. Over residues 407–422 the composition is skewed to low complexity; that stretch reads SSSSSDTSSRSFFDPT.

In terms of assembly, interacts with TPR; this interaction mediates ZC3HC1 nuclear envelopes (NE)-association but also required for proper positioning of a substantial amount of TPR at the nuclear basket (NB). Post-translationally, phosphorylated. May also be weakly phosphorylated on Tyr residues.

It localises to the nucleus. The protein resides in the nucleus envelope. Functionally, required for proper positioning of a substantial amount of TPR at the nuclear basket (NB) through interaction with TPR. In Pongo abelii (Sumatran orangutan), this protein is Zinc finger C3HC-type protein 1 (ZC3HC1).